The sequence spans 601 residues: Glutathione-regulated potassium-efflux system protein KefB (601 aa).

13 helical membrane passes run 4 to 24 (ADLL…VPLA), 29 to 49 (IGAV…GLGF), 55 to 75 (EILH…GLEL), 87 to 107 (IFGV…GLLM), 111 to 131 (FLWQ…TAMA), 152 to 172 (VLLF…LLAG), 177 to 197 (HFDW…LIGG), 207 to 227 (FIAA…LVLS), 230 to 250 (LFMD…GVLL), 262 to 282 (AIDP…GMSL), 284 to 304 (LGVL…LVVI), 324 to 344 (MQFA…FSTA), and 356 to 376 (ALLL…MKGI). Residues 400–519 (KPQVIVVGFG…AGVTQFSRET (120 aa)) enclose the RCK N-terminal domain.

The protein belongs to the monovalent cation:proton antiporter 2 (CPA2) transporter (TC 2.A.37) family. KefB subfamily. In terms of assembly, interacts with the regulatory subunit KefG.

Its subcellular location is the cell inner membrane. Functionally, pore-forming subunit of a potassium efflux system that confers protection against electrophiles. Catalyzes K(+)/H(+) antiport. In Salmonella paratyphi A (strain ATCC 9150 / SARB42), this protein is Glutathione-regulated potassium-efflux system protein KefB.